The chain runs to 592 residues: MAAAAVVAATVPAQSMGADGASSVHWFRKGLRLHDNPALLAAVRGARCVRCVYILDPWFAASSSVGINRWRFLLQSLEDLDTSLRKLNSRLFVVRGQPADVFPRLFKEWGVTRLTFEYDSEPFGKERDAAIMKMAKEAGVEVVTENSHTLYDLDRIIELNGQKPPLTYKRFQALISRMELPKKPAVAVSSQQMESCRAEIQENHDDTYGVPSLEELGFPTEGLGPAVWQGGETEALARLDKHLERKAWVANYERPRMNANSLLASPTGLSPYLRFGCLSCRLFYYRLWDLYKKVKRNSTPPLSLFGQLLWREFFYTAATNNPRFDRMEGNPICIQIPWDRNPEALAKWAEGKTGFPWIDAIMTQLRQEGWIHHLARHAVACFLTRGDLWVSWESGVRVFDELLLDADFSVNAGSWMWLSCSAFFQQFFHCYCPVGFGRRTDPSGDYIRRYLPKLKGFPSRYIYEPWNAPESVQKAAKCIIGVDYPRPIVNHAETSRLNIERMKQIYQQLSRYRGLCLLASVPSCVEDLSHPVAEPGSSQAGSISNTGPRALSSGPASPKRKLEAAEEPPGEELTKRARVTEMPTQEPASKDS.

A Photolyase/cryptochrome alpha/beta domain is found at 21–150; the sequence is ASSVHWFRKG…EVVTENSHTL (130 aa). Lys-29 is covalently cross-linked (Glycyl lysine isopeptide (Lys-Gly) (interchain with G-Cter in ubiquitin)). At Ser-89 the chain carries Phosphoserine. Glycyl lysine isopeptide (Lys-Gly) (interchain with G-Cter in ubiquitin) cross-links involve residues Lys-125 and Lys-241. Ser-265 carries the phosphoserine; by MAPK modification. Ser-270 is an FAD binding site. The residue at position 298 (Ser-298) is a Phosphoserine. Gln-307 provides a ligand contact to FAD. Lys-347 participates in a covalent cross-link: Glycyl lysine isopeptide (Lys-Gly) (interchain with G-Cter in ubiquitin). Residues His-373 and 405–407 contribute to the FAD site; that span reads DAD. Residues 389 to 488 are required for inhibition of CLOCK-BMAL1-mediated transcription; the sequence is WVSWESGVRV…IIGVDYPRPI (100 aa). Glycyl lysine isopeptide (Lys-Gly) (interchain with G-Cter in ubiquitin) cross-links involve residues Lys-474 and Lys-503. Positions 532–592 are disordered; that stretch reads VAEPGSSQAG…PTQEPASKDS (61 aa). A compositionally biased stretch (polar residues) spans 536–547; it reads GSSQAGSISNTG. A Phosphoserine; by GSK3-beta modification is found at Ser-553. Phosphoserine; by DYRK1A and MAPK is present on Ser-557. Residues 582–592 are compositionally biased toward polar residues; sequence MPTQEPASKDS.

Belongs to the DNA photolyase class-1 family. Component of the circadian core oscillator, which includes the CRY proteins, CLOCK or NPAS2, BMAL1 or BMAL2, CSNK1D and/or CSNK1E, TIMELESS, and the PER proteins. Interacts with TIMELESS. Interacts directly with PER1, PER2 and PER3; interaction with PER2 inhibits its ubiquitination and vice versa. Interacts with CLOCK-BMAL1. Interacts with BMAL1. Interacts with CLOCK. Interacts with NFIL3. Interacts with FBXL3 and FBXL21. FBXL3, PER2 and the cofactor FAD compete for overlapping binding sites. FBXL3 cannot bind CRY2 that interacts already with PER2 or that contains bound FAD. Interacts with PPP5C (via TPR repeats); the interaction down-regulates the PPP5C phosphatase activity on CSNK1E. Interacts with nuclear receptors AR and NR3C1/GR; the interaction is ligand dependent. Interacts with PRKDC. Interacts with CIART. Interacts with DDB1, USP7 and TARDBP. Interacts with HNF4A. Interacts with PPARA. Interacts with PPARG in a ligand-dependent manner. Interacts with PPARD (via domain NR LBD) in a ligand-dependent manner. Interacts with NR1I2 (via domain NR LBD) in a ligand-dependent manner. Interacts with NR1I3 and VDR in a ligand-dependent manner. It depends on FAD as a cofactor. (6R)-5,10-methylene-5,6,7,8-tetrahydrofolate is required as a cofactor. Phosphorylation on Ser-265 by MAPK is important for the inhibition of CLOCK-BMAL1-mediated transcriptional activity. Phosphorylation by CSKNE requires interaction with PER1 or PER2. Phosphorylated in a circadian manner at Ser-553 and Ser-557 in the suprachiasmatic nucleus (SCN) and liver. Phosphorylation at Ser-557 by DYRK1A promotes subsequent phosphorylation at Ser-553 by GSK3-beta: the two-step phosphorylation at the neighboring Ser residues leads to its proteasomal degradation. Post-translationally, ubiquitinated by the SCF(FBXL3) and SCF(FBXL21) complexes, regulating the balance between degradation and stabilization. The SCF(FBXL3) complex is mainly nuclear and mediates ubiquitination and subsequent degradation of CRY2. In contrast, cytoplasmic SCF(FBXL21) complex-mediated ubiquitination leads to stabilize CRY2 and counteract the activity of the SCF(FBXL3) complex. The SCF(FBXL3) and SCF(FBXL21) complexes probably mediate ubiquitination at different Lys residues. The SCF(FBXL3) complex recognizes and binds CRY2 phosphorylated at Ser-553 and Ser-557. Ubiquitination may be inhibited by PER2. Deubiquitinated by USP7. Expression in the retina is restricted to the photoreceptor layer (at protein level). Expressed in all tissues examined including heart, brain, spleen, lung, liver, skeletal muscle, kidney and testis. Weak expression in spleen.

The protein resides in the cytoplasm. The protein localises to the nucleus. With respect to regulation, KL001 (N-[3-(9H-carbazol-9-yl)-2-hydroxypropyl]-N-(2-furanylmethyl)-methanesulfonamide) binds to CRY1 and stabilizes it by inhibiting FBXL3- and ubiquitin-dependent degradation of CRY1 resulting in lengthening of the circadian periods. KL001-mediated CRY1 stabilization can inhibit glucagon-induced gluconeogenesis in primary hepatocytes. In terms of biological role, transcriptional repressor which forms a core component of the circadian clock. The circadian clock, an internal time-keeping system, regulates various physiological processes through the generation of approximately 24 hour circadian rhythms in gene expression, which are translated into rhythms in metabolism and behavior. It is derived from the Latin roots 'circa' (about) and 'diem' (day) and acts as an important regulator of a wide array of physiological functions including metabolism, sleep, body temperature, blood pressure, endocrine, immune, cardiovascular, and renal function. Consists of two major components: the central clock, residing in the suprachiasmatic nucleus (SCN) of the brain, and the peripheral clocks that are present in nearly every tissue and organ system. Both the central and peripheral clocks can be reset by environmental cues, also known as Zeitgebers (German for 'timegivers'). The predominant Zeitgeber for the central clock is light, which is sensed by retina and signals directly to the SCN. The central clock entrains the peripheral clocks through neuronal and hormonal signals, body temperature and feeding-related cues, aligning all clocks with the external light/dark cycle. Circadian rhythms allow an organism to achieve temporal homeostasis with its environment at the molecular level by regulating gene expression to create a peak of protein expression once every 24 hours to control when a particular physiological process is most active with respect to the solar day. Transcription and translation of core clock components (CLOCK, NPAS2, BMAL1, BMAL2, PER1, PER2, PER3, CRY1 and CRY2) plays a critical role in rhythm generation, whereas delays imposed by post-translational modifications (PTMs) are important for determining the period (tau) of the rhythms (tau refers to the period of a rhythm and is the length, in time, of one complete cycle). A diurnal rhythm is synchronized with the day/night cycle, while the ultradian and infradian rhythms have a period shorter and longer than 24 hours, respectively. Disruptions in the circadian rhythms contribute to the pathology of cardiovascular diseases, cancer, metabolic syndromes and aging. A transcription/translation feedback loop (TTFL) forms the core of the molecular circadian clock mechanism. Transcription factors, CLOCK or NPAS2 and BMAL1 or BMAL2, form the positive limb of the feedback loop, act in the form of a heterodimer and activate the transcription of core clock genes and clock-controlled genes (involved in key metabolic processes), harboring E-box elements (5'-CACGTG-3') within their promoters. The core clock genes: PER1/2/3 and CRY1/2 which are transcriptional repressors form the negative limb of the feedback loop and interact with the CLOCK|NPAS2-BMAL1|BMAL2 heterodimer inhibiting its activity and thereby negatively regulating their own expression. This heterodimer also activates nuclear receptors NR1D1/2 and RORA/B/G, which form a second feedback loop and which activate and repress BMAL1 transcription, respectively. CRY1 and CRY2 have redundant functions but also differential and selective contributions at least in defining the pace of the SCN circadian clock and its circadian transcriptional outputs. Less potent transcriptional repressor in cerebellum and liver than CRY1, though less effective in lengthening the period of the SCN oscillator. Seems to play a critical role in tuning SCN circadian period by opposing the action of CRY1. With CRY1, dispensable for circadian rhythm generation but necessary for the development of intercellular networks for rhythm synchrony. May mediate circadian regulation of cAMP signaling and gluconeogenesis by blocking glucagon-mediated increases in intracellular cAMP concentrations and in CREB1 phosphorylation. Besides its role in the maintenance of the circadian clock, is also involved in the regulation of other processes. Plays a key role in glucose and lipid metabolism modulation, in part, through the transcriptional regulation of genes involved in these pathways, such as LEP or ACSL4. Represses glucocorticoid receptor NR3C1/GR-induced transcriptional activity by binding to glucocorticoid response elements (GREs). Represses the CLOCK-BMAL1 induced transcription of BHLHE40/DEC1 and NAMPT. Represses PPARD and its target genes in the skeletal muscle and limits exercise capacity. Represses the transcriptional activity of NR1I2. This is Cryptochrome-2 (Cry2) from Mus musculus (Mouse).